Here is a 623-residue protein sequence, read N- to C-terminus: Chaperone protein dnaK (623 aa).

The disordered stretch occupies residues 598–623 (TPDAGAEGGAAPSQDDAIETDFSTEK).

Belongs to the heat shock protein 70 family.

It localises to the plastid. It is found in the chloroplast. Functionally, acts as a chaperone. The sequence is that of Chaperone protein dnaK from Emiliania huxleyi (Coccolithophore).